The primary structure comprises 231 residues: Small ribosomal subunit protein uS3c (231 aa).

A KH type-2 domain is found at 39–123 (LRNFIKKKYI…HLRLSVKPLR (85 aa)).

The protein belongs to the universal ribosomal protein uS3 family. As to quaternary structure, part of the 30S ribosomal subunit.

The protein localises to the plastid. It localises to the chloroplast. The polypeptide is Small ribosomal subunit protein uS3c (rps3) (Chlorella vulgaris (Green alga)).